The primary structure comprises 66 residues: Large ribosomal subunit protein bL35 (66 aa).

A disordered region spans residues 25–45 (QAAGKRHGMSKRPQKMKRNAR). Positions 28–44 (GKRHGMSKRPQKMKRNA) are enriched in basic residues.

The protein belongs to the bacterial ribosomal protein bL35 family.

This Rhodospirillum centenum (strain ATCC 51521 / SW) protein is Large ribosomal subunit protein bL35.